The sequence spans 420 residues: Gamma-glutamyl phosphate reductase (420 aa).

This sequence belongs to the gamma-glutamyl phosphate reductase family.

Its subcellular location is the cytoplasm. It catalyses the reaction L-glutamate 5-semialdehyde + phosphate + NADP(+) = L-glutamyl 5-phosphate + NADPH + H(+). It participates in amino-acid biosynthesis; L-proline biosynthesis; L-glutamate 5-semialdehyde from L-glutamate: step 2/2. Its function is as follows. Catalyzes the NADPH-dependent reduction of L-glutamate 5-phosphate into L-glutamate 5-semialdehyde and phosphate. The product spontaneously undergoes cyclization to form 1-pyrroline-5-carboxylate. This is Gamma-glutamyl phosphate reductase from Streptococcus pneumoniae serotype 4 (strain ATCC BAA-334 / TIGR4).